The primary structure comprises 423 residues: UDP-N-acetylglucosamine 1-carboxyvinyltransferase (423 aa).

22–23 (KN) is a phosphoenolpyruvate binding site. Arginine 98 provides a ligand contact to UDP-N-acetyl-alpha-D-glucosamine. The Proton donor role is filled by cysteine 122. Cysteine 122 is modified (2-(S-cysteinyl)pyruvic acid O-phosphothioketal). UDP-N-acetyl-alpha-D-glucosamine is bound by residues 127–131 (RPVDQ), aspartate 311, and isoleucine 333.

This sequence belongs to the EPSP synthase family. MurA subfamily.

The protein resides in the cytoplasm. The catalysed reaction is phosphoenolpyruvate + UDP-N-acetyl-alpha-D-glucosamine = UDP-N-acetyl-3-O-(1-carboxyvinyl)-alpha-D-glucosamine + phosphate. It functions in the pathway cell wall biogenesis; peptidoglycan biosynthesis. Its function is as follows. Cell wall formation. Adds enolpyruvyl to UDP-N-acetylglucosamine. This chain is UDP-N-acetylglucosamine 1-carboxyvinyltransferase, found in Stenotrophomonas maltophilia (strain R551-3).